A 307-amino-acid polypeptide reads, in one-letter code: Ornithine carbamoyltransferase (307 aa).

Carbamoyl phosphate contacts are provided by residues 51–54 (STRT), Gln78, Arg102, and 129–132 (HPCQ). L-ornithine contacts are provided by residues Asn160, Asp220, and 224–225 (SM). Carbamoyl phosphate contacts are provided by residues 260–261 (CL) and Arg288.

This sequence belongs to the aspartate/ornithine carbamoyltransferase superfamily. OTCase family.

Its subcellular location is the cytoplasm. It carries out the reaction carbamoyl phosphate + L-ornithine = L-citrulline + phosphate + H(+). It functions in the pathway amino-acid biosynthesis; L-arginine biosynthesis; L-arginine from L-ornithine and carbamoyl phosphate: step 1/3. Its function is as follows. Reversibly catalyzes the transfer of the carbamoyl group from carbamoyl phosphate (CP) to the N(epsilon) atom of ornithine (ORN) to produce L-citrulline. The sequence is that of Ornithine carbamoyltransferase (argF) from Archaeoglobus fulgidus (strain ATCC 49558 / DSM 4304 / JCM 9628 / NBRC 100126 / VC-16).